We begin with the raw amino-acid sequence, 416 residues long: Glutamyl-tRNA reductase (416 aa).

Substrate-binding positions include 49–52 (TCNR), Ser105, 110–112 (EPQ), and Gln116. Cys50 acts as the Nucleophile in catalysis. 185–190 (GAGETI) is a binding site for NADP(+).

Belongs to the glutamyl-tRNA reductase family. As to quaternary structure, homodimer.

It catalyses the reaction (S)-4-amino-5-oxopentanoate + tRNA(Glu) + NADP(+) = L-glutamyl-tRNA(Glu) + NADPH + H(+). Its pathway is porphyrin-containing compound metabolism; protoporphyrin-IX biosynthesis; 5-aminolevulinate from L-glutamyl-tRNA(Glu): step 1/2. Its function is as follows. Catalyzes the NADPH-dependent reduction of glutamyl-tRNA(Glu) to glutamate 1-semialdehyde (GSA). In Shewanella loihica (strain ATCC BAA-1088 / PV-4), this protein is Glutamyl-tRNA reductase.